Here is a 66-residue protein sequence, read N- to C-terminus: Large ribosomal subunit protein uL29 (66 aa).

It belongs to the universal ribosomal protein uL29 family. As to quaternary structure, part of the 50S ribosomal subunit.

The sequence is that of Large ribosomal subunit protein uL29 (rpmC) from Bacillus subtilis (strain 168).